The primary structure comprises 606 residues: Pentatricopeptide repeat-containing protein At1g31920 (606 aa).

9 PPR repeats span residues 96 to 130, 131 to 165, 166 to 200, 201 to 227, 233 to 263, 268 to 298, 299 to 333, 334 to 368, and 370 to 404; these read CTFD…GNEP, DNFT…GLEA, DVFV…TAAS, WSSM…MCSE, EESG…LLRN, NIIV…MEKR, NNLT…GLEP, DHVV…GKVE, and TAEH…KNDV. The segment at 405–480 is type E motif; that stretch reads IWRTFLSQCR…TPGFSIVELK (76 aa). Positions 481-511 are type E(+) motif; sequence GKTHRFVSQDRSHPKCKEIYKMLHQMEWQLK. Residues 512–606 are type DYW motif; it reads FEGYSPDLTQ…GGTCSCKDYW (95 aa).

Belongs to the PPR family. PCMP-H subfamily.

In Arabidopsis thaliana (Mouse-ear cress), this protein is Pentatricopeptide repeat-containing protein At1g31920 (PCMP-H11).